Here is a 377-residue protein sequence, read N- to C-terminus: MVTNRVDVFWHEGMLRHDAVEGVFDTGYDPGFLDVLEKHPENADRVRNMLSILRRGPIAPHVNWFTGLPAIVSELLMFHTSEYIEKLVEADKSGERCEIAAGTFMSPGSWEAALLAAGTTLSAMQHILDCHGKIAYALVRPPGHHSQPTQADGYCFLNNAALAVKLALNSGSCSRVAVIDIDVHYGNGTAEGFYTSDKVLTVSLHMNHGSWGSSHPQKGSIDELGEDVGLGYNLNVPLPNGTGDRGYEYAMNELVVPAVRRFGPDMVVLVVGQDSSAFDPNGRQSLTMNGYRRIGQIMRGVAEEHSHGRLLMVQEGGYHVTYAAYCLHAMLEGVLKIPEPHLSDPIAYYPEEEANAVAAVESIKTYHTEFVPFLRGT.

The interval 5–336 (RVDVFWHEGM…LHAMLEGVLK (332 aa)) is histone deacetylase. Histidine 145 functions as the Proton donor/acceptor in the catalytic mechanism. The Zn(2+) site is built by aspartate 182, histidine 184, and aspartate 274.

This sequence belongs to the histone deacetylase family. Zn(2+) serves as cofactor. Expressed in stems, leaves, flowers, siliques and mature seeds.

It localises to the nucleus. Its subcellular location is the cytoplasm. It catalyses the reaction N(6)-acetyl-L-lysyl-[histone] + H2O = L-lysyl-[histone] + acetate. In terms of biological role, responsible for the deacetylation of lysine residues on the N-terminal part of the core histones (H2A, H2B, H3 and H4). Histone deacetylation gives a tag for epigenetic repression and plays an important role in transcriptional regulation, cell cycle progression and developmental events. Histone deacetylases act via the formation of large multiprotein complexes. The polypeptide is Histone deacetylase 8 (Arabidopsis thaliana (Mouse-ear cress)).